A 255-amino-acid chain; its full sequence is 4-hydroxy-tetrahydrodipicolinate reductase (255 aa).

NAD(+) is bound by residues 9–14 (GYRGKM), 89–91 (GTT), and 115–118 (APNF). His145 acts as the Proton donor/acceptor in catalysis. His146 is a binding site for (S)-2,3,4,5-tetrahydrodipicolinate. Lys149 (proton donor) is an active-site residue. 155–156 (GT) lines the (S)-2,3,4,5-tetrahydrodipicolinate pocket.

Belongs to the DapB family.

The protein resides in the cytoplasm. The enzyme catalyses (S)-2,3,4,5-tetrahydrodipicolinate + NAD(+) + H2O = (2S,4S)-4-hydroxy-2,3,4,5-tetrahydrodipicolinate + NADH + H(+). The catalysed reaction is (S)-2,3,4,5-tetrahydrodipicolinate + NADP(+) + H2O = (2S,4S)-4-hydroxy-2,3,4,5-tetrahydrodipicolinate + NADPH + H(+). The protein operates within amino-acid biosynthesis; L-lysine biosynthesis via DAP pathway; (S)-tetrahydrodipicolinate from L-aspartate: step 4/4. Functionally, catalyzes the conversion of 4-hydroxy-tetrahydrodipicolinate (HTPA) to tetrahydrodipicolinate. This Streptococcus uberis (strain ATCC BAA-854 / 0140J) protein is 4-hydroxy-tetrahydrodipicolinate reductase.